Consider the following 343-residue polypeptide: MWPNASSLGPCFRPMNITLEERRLIASPWFAASFCLVGLASNLLALSVLMGARQGSSQSRSSFLTFLCGLVLTDFMGLLVTGAIVVTQHFVLFEWQAVDPGCSLCHFMGVIMVFFGLCPLLLGAAMASERFLGITRPFSRPATASQRRAWTTVGLVWASALALGLLPLLGVGHYTVQYPGSWCFLTLGTDPGDVAFGLLFALLGSISVGMSFLLNTISVATLCHVYHGQATAQQRPRDCEVEMMVQLMGIMVVASICWMPLLVFIAQTVLQSPPAMSPTGQLSRLTERQLLIYLRVATWNQILDPWVYILFRRAVIQRFYPRLSTRSRSLSLQPQLTRRSTIH.

Over 1-29 (MWPNASSLGPCFRPMNITLEERRLIASPW) the chain is Extracellular. 2 N-linked (GlcNAc...) asparagine glycosylation sites follow: Asn-4 and Asn-16. Residues 30-52 (FAASFCLVGLASNLLALSVLMGA) form a helical membrane-spanning segment. Residues 53 to 66 (RQGSSQSRSSFLTF) lie on the Cytoplasmic side of the membrane. The helical transmembrane segment at 67 to 87 (LCGLVLTDFMGLLVTGAIVVT) threads the bilayer. The Extracellular portion of the chain corresponds to 88–106 (QHFVLFEWQAVDPGCSLCH). A disulfide bridge links Cys-105 with Cys-183. Residues 107 to 128 (FMGVIMVFFGLCPLLLGAAMAS) traverse the membrane as a helical segment. At 129 to 149 (ERFLGITRPFSRPATASQRRA) the chain is on the cytoplasmic side. Residues 150-172 (WTTVGLVWASALALGLLPLLGVG) form a helical membrane-spanning segment. The Extracellular segment spans residues 173–193 (HYTVQYPGSWCFLTLGTDPGD). Residues 194–219 (VAFGLLFALLGSISVGMSFLLNTISV) traverse the membrane as a helical segment. Topologically, residues 220–246 (ATLCHVYHGQATAQQRPRDCEVEMMVQ) are cytoplasmic. A helical membrane pass occupies residues 247–270 (LMGIMVVASICWMPLLVFIAQTVL). Residues 271–289 (QSPPAMSPTGQLSRLTERQ) are Extracellular-facing. The helical transmembrane segment at 290–311 (LLIYLRVATWNQILDPWVYILF) threads the bilayer. The Cytoplasmic segment spans residues 312–343 (RRAVIQRFYPRLSTRSRSLSLQPQLTRRSTIH). Phosphoserine occurs at positions 329 and 331.

It belongs to the G-protein coupled receptor 1 family. In terms of assembly, interacts with RPGRIP1L. Interacts with RACK1; the interaction regulates TBXA2R cell surface expression.

The protein localises to the cell membrane. In terms of biological role, receptor for thromboxane A2 (TXA2), a potent stimulator of platelet aggregation. The activity of this receptor is mediated by a G-protein that activates a phosphatidylinositol-calcium second messenger system. In the kidney, the binding of TXA2 to glomerular TP receptors causes intense vasoconstriction. Activates phospholipase C and adenylyl cyclase. The polypeptide is Thromboxane A2 receptor (TBXA2R) (Bos taurus (Bovine)).